The primary structure comprises 236 residues: Terpene cyclase andB (236 aa).

7 helical membrane-spanning segments follow: residues 13–33 (TVVNLLGSASGIGWILNYILM), 45–65 (MSMLPLCCNIAWEFVYGILCP), 70–90 (VVRPVILSWLVLNCLVVYAAI), 106–126 (HLPLLFTVGIAACTGFHIALI), 135–155 (FLWSARSCQVLLSIGGLFQLL), 166–186 (VLWLSRFLGSICGVLKMTLMW), and 200–220 (LTAYCIALWIISDVLYGVVFY).

The protein belongs to the paxB family.

It localises to the membrane. The protein operates within secondary metabolite biosynthesis; terpenoid biosynthesis. Functionally, terpene cyclase; part of the gene cluster that mediates the biosynthesis of anditomin, a fungal meroterpenoid. The first step of the pathway is the synthesis of 3,5-dimethylorsellinic acid (DMOA) by the polyketide synthase andM. DMOA is then converted to the phthalide compound 5,7-dihydroxy-4,6-dimethylphthalide (DHDMP) by the cytochrome P450 monooxygenase andK, which is further prenylated by the prenyltransferase andD to yield farnesyl-DHDMP. Further epoxidation by the FAD-dependent monooxygenase andE leads to epoxyfarnesyl-DHDMP. The next step involves the terpene cyclase andB that converts epoxyfarnesyl-DHDMP into preandiloid A through opening of the epoxide ring followed by the cyclization of the farnesyl moiety. Preandiloid A is in turn oxidized at the C-3 hydroxyl group to yield preandiloid B by the dehydrogenase andC. The dioxygenase andA is solely responsible for the dehydrogenation of preandiloid B leading to the enone preandiloid C, as well as for the intriguing structural rearrangement to generate the bicyclo[2.2.2]octane core, transforming preandiloid C into andiconin. FAD-binding monooxygenase andJ then produces andilesin D which is reduced by dehydrogenase andI to yield andilesin A. Action of acetyltransferase andG followed by a spontaneous acetate elimination leads then to andilesin B, which is in turn substrate of the short chain dehydrogenase andH to yield andilesin C. Finally, the dioxygenase andF catalyzes the transformation of andilesin C to anditomin. The polypeptide is Terpene cyclase andB (Emericella variicolor (Aspergillus stellatus)).